Reading from the N-terminus, the 508-residue chain is Glycerol kinase (508 aa).

Thr14 contacts ADP. ATP-binding residues include Thr14, Thr15, and Ser16. Position 14 (Thr14) interacts with sn-glycerol 3-phosphate. Arg18 is a binding site for ADP. Residues Arg84, Glu85, and Tyr136 each coordinate sn-glycerol 3-phosphate. The glycerol site is built by Arg84, Glu85, and Tyr136. His232 carries the phosphohistidine; by HPr modification. Position 246 (Asp246) interacts with sn-glycerol 3-phosphate. Glycerol-binding residues include Asp246 and Gln247. ADP contacts are provided by Thr268 and Gly311. Residues Thr268, Gly311, Gln315, and Gly412 each coordinate ATP. 2 residues coordinate ADP: Gly412 and Asn416.

The protein belongs to the FGGY kinase family. Homotetramer and homodimer (in equilibrium). Post-translationally, the phosphoenolpyruvate-dependent sugar phosphotransferase system (PTS), including enzyme I, and histidine-containing protein (HPr) are required for the phosphorylation, which leads to the activation of the enzyme.

It catalyses the reaction glycerol + ATP = sn-glycerol 3-phosphate + ADP + H(+). It participates in polyol metabolism; glycerol degradation via glycerol kinase pathway; sn-glycerol 3-phosphate from glycerol: step 1/1. Activated by phosphorylation and inhibited by fructose 1,6-bisphosphate (FBP). Key enzyme in the regulation of glycerol uptake and metabolism. Catalyzes the phosphorylation of glycerol to yield sn-glycerol 3-phosphate. The sequence is that of Glycerol kinase from Streptococcus pyogenes serotype M28 (strain MGAS6180).